The sequence spans 356 residues: Histidinol-phosphate aminotransferase (356 aa).

Residue K210 is modified to N6-(pyridoxal phosphate)lysine.

Belongs to the class-II pyridoxal-phosphate-dependent aminotransferase family. Histidinol-phosphate aminotransferase subfamily. Homodimer. Pyridoxal 5'-phosphate is required as a cofactor.

It carries out the reaction L-histidinol phosphate + 2-oxoglutarate = 3-(imidazol-4-yl)-2-oxopropyl phosphate + L-glutamate. Its pathway is amino-acid biosynthesis; L-histidine biosynthesis; L-histidine from 5-phospho-alpha-D-ribose 1-diphosphate: step 7/9. The chain is Histidinol-phosphate aminotransferase from Gluconacetobacter diazotrophicus (strain ATCC 49037 / DSM 5601 / CCUG 37298 / CIP 103539 / LMG 7603 / PAl5).